Reading from the N-terminus, the 256-residue chain is Hypodermin-B (256 aa).

The signal sequence occupies residues 1 to 22; sequence MLKFVILVCSVACVFGAVVPGG. Residues 23 to 30 constitute a propeptide, activation peptide; that stretch reads MLPQLDGR. One can recognise a Peptidase S1 domain in the interval 31–254; that stretch reads IVGGFEADIE…VRSWITENAK (224 aa). The cysteines at positions 56 and 72 are disulfide-linked. Residues histidine 71 and aspartate 116 each act as charge relay system in the active site. Cystine bridges form between cysteine 180-cysteine 197 and cysteine 206-cysteine 230. The Charge relay system role is filled by serine 210.

This sequence belongs to the peptidase S1 family.

Its subcellular location is the secreted. Functionally, protease that shows preferential cleavage after Arg and Lys residues. This is Hypodermin-B from Hypoderma lineatum (Early cattle grub).